A 201-amino-acid chain; its full sequence is Small ribosomal subunit protein uS2 (201 aa).

The protein belongs to the universal ribosomal protein uS2 family. Part of the 50S ribosomal subunit.

This Thermococcus kodakarensis (strain ATCC BAA-918 / JCM 12380 / KOD1) (Pyrococcus kodakaraensis (strain KOD1)) protein is Small ribosomal subunit protein uS2.